Reading from the N-terminus, the 436-residue chain is Gamma-glutamyl phosphate reductase (436 aa).

The protein belongs to the gamma-glutamyl phosphate reductase family.

The protein resides in the cytoplasm. It catalyses the reaction L-glutamate 5-semialdehyde + phosphate + NADP(+) = L-glutamyl 5-phosphate + NADPH + H(+). Its pathway is amino-acid biosynthesis; L-proline biosynthesis; L-glutamate 5-semialdehyde from L-glutamate: step 2/2. In terms of biological role, catalyzes the NADPH-dependent reduction of L-glutamate 5-phosphate into L-glutamate 5-semialdehyde and phosphate. The product spontaneously undergoes cyclization to form 1-pyrroline-5-carboxylate. The sequence is that of Gamma-glutamyl phosphate reductase from Prochlorococcus marinus (strain MIT 9301).